Consider the following 206-residue polypeptide: Probable GTP-binding protein EngB (206 aa).

An EngB-type G domain is found at 8–195 (RDAEVVLVGR…EECLRTRFHE (188 aa)). GTP-binding positions include 16–23 (GRSNVGKS), 41–45 (GVTRQ), 60–63 (DLPG), 140–143 (NKTD), and 175–177 (ICA). Mg(2+) is bound by residues Ser23 and Thr43.

The protein belongs to the TRAFAC class TrmE-Era-EngA-EngB-Septin-like GTPase superfamily. EngB GTPase family. Mg(2+) serves as cofactor.

Necessary for normal cell division and for the maintenance of normal septation. This Halorubrum lacusprofundi (strain ATCC 49239 / DSM 5036 / JCM 8891 / ACAM 34) protein is Probable GTP-binding protein EngB.